The primary structure comprises 426 residues: 10-deoxymethynolide desosaminyltransferase (426 aa).

The protein belongs to the glycosyltransferase 28 family. Forms a complex with DesVIII.

The enzyme catalyses 10-deoxymethynolide + dTDP-alpha-D-desosamine = 10-deoxymethymycin + dTDP + H(+). Its pathway is antibiotic biosynthesis. Involved in the biosynthesis of the macrolide antibiotics methymycin, neomethymycin, narbomycin, and pikromycin. Catalyzes the attachment of dTDP-D-desosamine onto 12- and 14-membered macrolactone rings 10-deoxymethynolide and narbonolide to produce 10-deoxymethymycin (YC-17) and narbomycin. DesVII is unique among glycosyltransferases in that it requires an additional protein component, DesVIII, for its activity. DesVII can recognize and process not only cyclic substrates of different ring size, but also a variety of linear substrates albeit with reduced, but measurable activities. Both L-sugars and D-sugars are recognized as substrates and variant substitutions at C-3 and C-4 are tolerated, but deoxygenation at C-6 is required. The chain is 10-deoxymethynolide desosaminyltransferase from Streptomyces venezuelae.